A 114-amino-acid polypeptide reads, in one-letter code: Cytochrome b-c1 complex subunit 1, mitochondrial (114 aa).

Residue Lys31 is modified to N6-acetyllysine.

This sequence belongs to the peptidase M16 family. UQCRC1/QCR1 subfamily. In terms of assembly, component of the ubiquinol-cytochrome c oxidoreductase (cytochrome b-c1 complex, complex III, CIII), a multisubunit enzyme composed of 11 subunits. The complex is composed of 3 respiratory subunits cytochrome b, cytochrome c1 and Rieske protein UQCRFS1, 2 core protein subunits UQCRC1/QCR1 and UQCRC2/QCR2, and 6 low-molecular weight protein subunits UQCRH/QCR6, UQCRB/QCR7, UQCRQ/QCR8, UQCR10/QCR9, UQCR11/QCR10 and subunit 9, the cleavage product of Rieske protein UQCRFS1. The complex exists as an obligatory dimer and forms supercomplexes (SCs) in the inner mitochondrial membrane with NADH-ubiquinone oxidoreductase (complex I, CI) and cytochrome c oxidase (complex IV, CIV), resulting in different assemblies (supercomplex SCI(1)III(2)IV(1) and megacomplex MCI(2)III(2)IV(2)). Interacts with UQCC6. Interacts with STMP1.

The protein localises to the mitochondrion inner membrane. In terms of biological role, component of the ubiquinol-cytochrome c oxidoreductase, a multisubunit transmembrane complex that is part of the mitochondrial electron transport chain which drives oxidative phosphorylation. The respiratory chain contains 3 multisubunit complexes succinate dehydrogenase (complex II, CII), ubiquinol-cytochrome c oxidoreductase (cytochrome b-c1 complex, complex III, CIII) and cytochrome c oxidase (complex IV, CIV), that cooperate to transfer electrons derived from NADH and succinate to molecular oxygen, creating an electrochemical gradient over the inner membrane that drives transmembrane transport and the ATP synthase. The cytochrome b-c1 complex catalyzes electron transfer from ubiquinol to cytochrome c, linking this redox reaction to translocation of protons across the mitochondrial inner membrane, with protons being carried across the membrane as hydrogens on the quinol. In the process called Q cycle, 2 protons are consumed from the matrix, 4 protons are released into the intermembrane space and 2 electrons are passed to cytochrome c. The 2 core subunits UQCRC1/QCR1 and UQCRC2/QCR2 are homologous to the 2 mitochondrial-processing peptidase (MPP) subunits beta-MPP and alpha-MPP respectively, and they seem to have preserved their MPP processing properties. May be involved in the in situ processing of UQCRFS1 into the mature Rieske protein and its mitochondrial targeting sequence (MTS)/subunit 9 when incorporated into complex III. Seems to play an important role in the maintenance of proper mitochondrial function in nigral dopaminergic neurons. This is Cytochrome b-c1 complex subunit 1, mitochondrial from Mesocricetus auratus (Golden hamster).